We begin with the raw amino-acid sequence, 214 residues long: Probable transaldolase (214 aa).

Lys-83 acts as the Schiff-base intermediate with substrate in catalysis.

Belongs to the transaldolase family. Type 3B subfamily.

Its subcellular location is the cytoplasm. It carries out the reaction D-sedoheptulose 7-phosphate + D-glyceraldehyde 3-phosphate = D-erythrose 4-phosphate + beta-D-fructose 6-phosphate. It participates in carbohydrate degradation; pentose phosphate pathway; D-glyceraldehyde 3-phosphate and beta-D-fructose 6-phosphate from D-ribose 5-phosphate and D-xylulose 5-phosphate (non-oxidative stage): step 2/3. In terms of biological role, transaldolase is important for the balance of metabolites in the pentose-phosphate pathway. The sequence is that of Probable transaldolase from Streptococcus equi subsp. equi (strain 4047).